Reading from the N-terminus, the 256-residue chain is Cilia- and flagella-associated protein 410 (256 aa).

LRR repeat units lie at residues 19 to 40 (SVRK…QEMP), 41 to 62 (SLEV…SRCQ), and 63 to 84 (RLSE…FYLK). Residues 97-137 (NPCCGTSPHRYRMTVLRTLPRLQKLDNQAVTEEELSRALSE) form the LRRCT domain. Disordered stretches follow at residues 129–156 (EELS…GGPK) and 168–212 (AETG…SSHR). Residues S136 and S177 each carry the phosphoserine modification.

As to quaternary structure, found in a complex with CFAP410, NEK1 and SPATA7. Interacts with NEK1. As to expression, widely expressed. Expressed in the retina.

The protein resides in the mitochondrion. It is found in the cytoplasm. Its subcellular location is the cytoskeleton. It localises to the cilium basal body. The protein localises to the cell projection. The protein resides in the cilium. It is found in the photoreceptor outer segment. In terms of biological role, plays a role in cilia formation and/or maintenance. Plays a role in the regulation of cell morphology and cytoskeletal organization. Involved in DNA damage repair. In Homo sapiens (Human), this protein is Cilia- and flagella-associated protein 410.